The sequence spans 179 residues: Large ribosomal subunit protein uL6 (179 aa).

This sequence belongs to the universal ribosomal protein uL6 family. Part of the 50S ribosomal subunit.

Functionally, this protein binds to the 23S rRNA, and is important in its secondary structure. It is located near the subunit interface in the base of the L7/L12 stalk, and near the tRNA binding site of the peptidyltransferase center. The sequence is that of Large ribosomal subunit protein uL6 from Synechococcus sp. (strain WH7803).